A 172-amino-acid polypeptide reads, in one-letter code: Adenine phosphoribosyltransferase (172 aa).

The protein belongs to the purine/pyrimidine phosphoribosyltransferase family. As to quaternary structure, homodimer.

It localises to the cytoplasm. The catalysed reaction is AMP + diphosphate = 5-phospho-alpha-D-ribose 1-diphosphate + adenine. Its pathway is purine metabolism; AMP biosynthesis via salvage pathway; AMP from adenine: step 1/1. Functionally, catalyzes a salvage reaction resulting in the formation of AMP, that is energically less costly than de novo synthesis. In Polynucleobacter necessarius subsp. necessarius (strain STIR1), this protein is Adenine phosphoribosyltransferase.